A 193-amino-acid polypeptide reads, in one-letter code: Ion-translocating oxidoreductase complex subunit A (193 aa).

Transmembrane regions (helical) follow at residues 4–24, 39–59, 72–92, 102–122, 134–154, and 171–191; these read LLLI…RFLG, LGMG…TWVL, LQTI…EMIV, SLGI…LAVL, LVFA…FAGL, and PIEL…AGLV.

It belongs to the NqrDE/RnfAE family. As to quaternary structure, the complex is composed of six subunits: RnfA, RnfB, RnfC, RnfD, RnfE and RnfG.

The protein localises to the cell inner membrane. Its function is as follows. Part of a membrane-bound complex that couples electron transfer with translocation of ions across the membrane. The sequence is that of Ion-translocating oxidoreductase complex subunit A from Syntrophotalea carbinolica (strain DSM 2380 / NBRC 103641 / GraBd1) (Pelobacter carbinolicus).